Reading from the N-terminus, the 398-residue chain is MNKEIIHKKSNGIIEWIDYRLPIFSFLKHFSYYQTPKNLNYLWNLGSIAGIALVIQIITGVILAMHYTPHVDHAFESVERIMRNVNYGWLLRYTHAVGASMFFAAIYLHIARGLYYGSYKTPRELLWHIGIIIFLIMMATAFMGYVLPWGQMSYWGATVITNLFSAIPLVGEPIVIWLWGGFSVDNPTLNRFFALHYLFPFIIVVLVILHLVALHQHGSNNPKGIDVKSTKDTIPFHPYYTVKDFVGFGVYFIIFAYFIFYAPNYLGHPDNYIPANPLVTPAHIVPEWYFLPFYAILRAVPSKLGGVFLMFGSIVVLFLLPWLDTSKIRSGNYRPIYRIAFWIFMADCLFLGYLGSKPVSEPYITISRFAVCYYFCHFLLVLPLIGKYEKPLPLPKVL.

Residues 45-65 (LGSIAGIALVIQIITGVILAM) form a helical membrane-spanning segment. Residues His95 and His109 each contribute to the heme b site. A run of 9 helical transmembrane segments spans residues 96–116 (AVGA…GLYY), 129–149 (IGII…VLPW), 164–184 (FSAI…GFSV), 192–212 (FFAL…LHLV), 245–265 (FVGF…APNY), 277–297 (PLVT…YAIL), 304–324 (LGGV…PWLD), 339–359 (IAFW…SKPV), and 366–386 (ISRF…PLIG). His196 and His210 together coordinate heme b.

Belongs to the cytochrome b family. The main subunits of complex b-c1 are: cytochrome b, cytochrome c1 and the Rieske protein. It depends on heme b as a cofactor.

It is found in the cell membrane. Component of the ubiquinol-cytochrome c reductase complex (complex III or cytochrome b-c1 complex), which is a respiratory chain that generates an electrochemical potential coupled to ATP synthesis. In Rickettsia prowazekii (strain Madrid E), this protein is Cytochrome b (petB).